A 488-amino-acid chain; its full sequence is MEIAGNSSTISPTFSTPTKKRNLVFPNSPITPLHQQALLGRNGRSSKRCSPKSSFIRNSPKIDVVNTDWSIPLCGSPRNKSRPASRSDRFIPSRPNTANAFVNSISSDVPFDYSESVAEACGFDLNTRVLAFKLDAPEAKKPVDLRTQHNRPQRPVVTPAKRRFNTTPERVLDAPGIIDDYYLNLLDWSNLNVVAVALERNVYVWNADSGSVSALAETDESTYVASVKWSHDGSFLSVGLGNGLVDIYDVESQTKLRTMAGHQARVGCLSWNRHVLSSGSRSGAIHHHDVRIANHQIGTLQGHSSEVCGLAWRSDGLQLASGGNDNVVQIWDARSSIPKFTKTNHNAAVKAVAWCPWQSNLLATGGGTMDKQIHFWNAATGARVNTVDAGSQVTSLIWSPHSKEIMSTHGFPDNNLSIWSYSSSGLTKQVDIPAHDTRVLYSALSPDGRILSTAASDENLKFWRVYDGDHVKRPIPITKTPSSSITIR.

Disordered stretches follow at residues 1–29 (MEIA…PNSP) and 74–93 (CGSP…FIPS). Over residues 7–17 (SSTISPTFSTP) the composition is skewed to low complexity. WD repeat units lie at residues 178–215 (IDDY…VSAL), 219–258 (DEST…KLRT), 261–298 (GHQA…HQIG), 302–341 (GHSS…PKFT), 344–386 (NHNA…RVNT), 388–429 (DAGS…LTKQ), and 434–473 (AHDT…HVKR).

The protein belongs to the WD repeat CDC20/Fizzy family. As to quaternary structure, interacts with cdc13, mad3 and mes1.

Its function is as follows. Required for mad2-dependent spindle checkpoint activation. Promotes ubiquitin-dependent degradation of cdc13 by the anaphase promoting complex/cyclosome (APC/C). The polypeptide is WD repeat-containing protein slp1 (slp1) (Schizosaccharomyces pombe (strain 972 / ATCC 24843) (Fission yeast)).